A 1348-amino-acid chain; its full sequence is Phosphoribosylformylglycinamidine synthase (1348 aa).

Residues 300–311 (GAATGAGGEIRD) and Ala701 contribute to the ATP site. Positions 702, 741, 745, and 941 each coordinate Mg(2+). Ser943 is an ATP binding site. The region spanning 1099 to 1348 (VAILREQGVN…MFRNARVWCG (250 aa)) is the Glutamine amidotransferase type-1 domain. Catalysis depends on Cys1192, which acts as the Nucleophile. Residues His1313 and Glu1315 contribute to the active site.

The protein in the N-terminal section; belongs to the FGAMS family. Monomer.

The protein resides in the cytoplasm. The catalysed reaction is N(2)-formyl-N(1)-(5-phospho-beta-D-ribosyl)glycinamide + L-glutamine + ATP + H2O = 2-formamido-N(1)-(5-O-phospho-beta-D-ribosyl)acetamidine + L-glutamate + ADP + phosphate + H(+). It functions in the pathway purine metabolism; IMP biosynthesis via de novo pathway; 5-amino-1-(5-phospho-D-ribosyl)imidazole from N(2)-formyl-N(1)-(5-phospho-D-ribosyl)glycinamide: step 1/2. Phosphoribosylformylglycinamidine synthase involved in the purines biosynthetic pathway. Catalyzes the ATP-dependent conversion of formylglycinamide ribonucleotide (FGAR) and glutamine to yield formylglycinamidine ribonucleotide (FGAM) and glutamate. This chain is Phosphoribosylformylglycinamidine synthase, found in Xanthomonas campestris pv. campestris (strain ATCC 33913 / DSM 3586 / NCPPB 528 / LMG 568 / P 25).